The chain runs to 249 residues: Exosome complex component Rrp41 (249 aa).

This sequence belongs to the RNase PH family. Rrp41 subfamily. Component of the archaeal exosome complex. Forms a hexameric ring-like arrangement composed of 3 Rrp41-Rrp42 heterodimers. The hexameric ring associates with a trimer of Rrp4 and/or Csl4 subunits.

It is found in the cytoplasm. Catalytic component of the exosome, which is a complex involved in RNA degradation. Has 3'-&gt;5' exoribonuclease activity. Can also synthesize heteromeric RNA-tails. This is Exosome complex component Rrp41 from Thermococcus kodakarensis (strain ATCC BAA-918 / JCM 12380 / KOD1) (Pyrococcus kodakaraensis (strain KOD1)).